Consider the following 615-residue polypeptide: Delta(14)-sterol reductase LBR (615 aa).

Positions 1–62 (MPSRKFADGE…DIKPLTSFRQ (62 aa)) constitute a Tudor domain. Residues 1–211 (MPSRKFADGE…IRAKDLEFGG (211 aa)) lie on the Nuclear side of the membrane. Positions 52 to 109 (NDIKPLTSFRQRKGGSTSSSPSRRRGSRSRSRSRSPGRPPKSARRSASASHQADIKEA) are disordered. At Lys-55 the chain carries N6-acetyllysine. Thr-58 is subject to Phosphothreonine. Ser-59 and Ser-67 each carry phosphoserine. Phosphoserine; by CDK1 occurs at positions 71 and 86. Residues 73–86 (SRRRGSRSRSRSRS) are compositionally biased toward basic residues. Phosphoserine is present on residues Ser-97 and Ser-99. The residue at position 118 (Thr-118) is a Phosphothreonine. A Phosphoserine modification is found at Ser-128. Residue Thr-200 is modified to Phosphothreonine. 8 helical membrane passes run 212 to 232 (VPGVFLIMFGLPVFLFLLLLM), 258 to 278 (VFGVYLLWFLIQVLFYLLPIG), 299 to 319 (FYAFILTSAVIGTSLFQGVEF), 326 to 346 (FLQFALAATVFCVVLSVYLYM), 386 to 406 (FCELRPGLIGWVVINLVMLLA), 447 to 467 (IIHDGFGFMLAFGDLVWVPFI), 481 to 501 (EVSWPMASLIIVLKLCGYVIF), and 561 to 581 (PCGFNHILPYFYIIYFTMLLV). Lys-594 and Lys-601 each carry N6-acetyllysine.

Belongs to the ERG4/ERG24 family. In terms of assembly, interacts with CBX5. Interacts with DNA. Interaction with DNA is sequence independent with higher affinity for supercoiled and relaxed circular DNA than linear DNA. Interacts with lamin B. Interacts with CLNK. Interacts with TMEM147; promoting LBR localization to the nucleus inner membrane. Post-translationally, phosphorylated by CDK1 in mitosis when the inner nuclear membrane breaks down into vesicles that dissociate from the lamina and the chromatin. It is phosphorylated by different protein kinases in interphase when the membrane is associated with these structures. Phosphorylation of LBR and HP1 proteins may be responsible for some of the alterations in chromatin organization and nuclear structure which occur at various times during the cell cycle. Phosphorylated by SRPK1. In late anaphase LBR is dephosphorylated, probably by PP1 and/or PP2A, allowing reassociation with chromatin. Expressed in the bone marrow, liver, heart, adrenal gland, lung, placenta and uterus. Expressed in osteoclasts and osteoblast-like cells.

The protein resides in the nucleus inner membrane. It localises to the endoplasmic reticulum membrane. The protein localises to the cytoplasm. Its subcellular location is the nucleus. The enzyme catalyses 5alpha-cholest-8,14-dien-3beta-ol + NADPH + H(+) = 5alpha-cholest-8-en-3beta-ol + NADP(+). The catalysed reaction is 4,4-dimethyl-5alpha-cholesta-8,24-dien-3beta-ol + NADP(+) = 4,4-dimethyl-5alpha-cholesta-8,14,24-trien-3beta-ol + NADPH + H(+). It catalyses the reaction 4,4-dimethyl-8,14-cholestadien-3beta-ol + NADPH + H(+) = 4,4-dimethyl-5alpha-cholest-8-en-3beta-ol + NADP(+). The protein operates within steroid biosynthesis; cholesterol biosynthesis. Catalyzes the reduction of the C14-unsaturated bond of lanosterol, as part of the metabolic pathway leading to cholesterol biosynthesis. Plays a critical role in myeloid cell cholesterol biosynthesis which is essential to both myeloid cell growth and functional maturation. Mediates the activation of NADPH oxidases, perhaps by maintaining critical levels of cholesterol required for membrane lipid raft formation during neutrophil differentiation. Anchors the lamina and the heterochromatin to the inner nuclear membrane. The sequence is that of Delta(14)-sterol reductase LBR (LBR) from Homo sapiens (Human).